The primary structure comprises 315 residues: MDTRRLLLCLCLWVACVVSKPTEKKDRVHHDPQLSEKVHDDAQNFDYDHDAFLGAEEAKTFDQLTPEESKERLGMIVSKIDLDNDGYVTEGELTAWIKKAQKKYVYDNVERQWQEFDLNQDGLVSWDEYRNVTYGTYLDDPDPDNSFNYKQMMVRDERRFKMADQDGDLIATKEEFTAFLHPEEFDYMKDIVVLETMEDIDKNGDGLIDLEEYIGDMYNHDGDANEPEWVKTEREQFVEFRDKNHDGKMDKEETKDWILPSDYDHAEAESRHLVYESDQNKDSKLTREEIVDKYDLFVGSQATDFGEALVRHDEF.

The N-terminal stretch at 1 to 19 (MDTRRLLLCLCLWVACVVS) is a signal peptide. 6 EF-hand domains span residues 68 to 103 (ESKE…AQKK), 104 to 139 (YVYD…TYLD), 151 to 186 (QMMV…EEFD), 188 to 223 (MKDI…HDGD), 229 to 264 (WVKT…SDYD), and 265 to 300 (HAEA…FVGS). 9 residues coordinate Ca(2+): Asp-81, Asp-83, Asp-85, Tyr-87, Glu-92, Asp-117, Asn-119, Asp-121, and Glu-128. Asn-131 is a glycosylation site (N-linked (GlcNAc...) asparagine). Ca(2+) is bound by residues Asp-164, Asp-166, Asp-168, Glu-175, Asp-201, Asn-203, Asp-205, Glu-212, Asp-242, Asn-244, Asp-246, Lys-248, Glu-253, Asp-278, Asn-280, Asp-282, Lys-284, and Glu-289. Residues 312–315 (HDEF) carry the Prevents secretion from ER motif.

It belongs to the CREC family. As to quaternary structure, interacts with ggcx.

It is found in the endoplasmic reticulum membrane. The protein localises to the golgi apparatus. The protein resides in the secreted. It localises to the melanosome. Its subcellular location is the sarcoplasmic reticulum lumen. Involved in regulation of vitamin K-dependent carboxylation of multiple N-terminal glutamate residues. Seems to inhibit gamma-carboxylase ggcx. Binds 7 calcium ions with a low affinity. This Xenopus tropicalis (Western clawed frog) protein is Calumenin (calu).